The sequence spans 623 residues: MSKVIGIDLGTTNSCVSVFERGESKVIPNKEGKNTTPSVVAFTDKGEILVGDVAKRQAVTNPEKTIYSIKRIMGLMSNEKNAEEAKARLPYHVVDRNGACAVEIAGKVYTPQEISAKILIKLKEDAEAYLGESVTDAVITVPAYFNDSQRKATKEAGTIAGLNVLRIINEPTAAALAYGLDKKEAEKILVYDLGGGTFDVTVLETGDNIVEVLATGGNAFLGGDDFDNKIIDWLVSEFKNETGIDLKGDIMALQRLKEAAENAKKELSSAQETEINLPFITADATGPKHLVKKLTRAKFEGMIDSLVGETITKINEVIKDAGLSKSDIKEVVMVGGSTRVPLVQEEVKKAFGKELNKSVNPDEVVAIGAAIQGAVIKGDVKDVLLLDVTPLSLGIETLGGVMTKIIEKGTTIPTKKSQVFSTAEDNQNAVTIMVLQGEREFARDNKSLGNFNLEGIPAAPRGVPQIEVEFDIDANGILTVSAKDKATGKAQNITISGSSGLSEDEINSMVKDAELHKEEDKKRKDAVEARNQADALVHQTEKSMSELGEKVPAEDRSNIEAALNDLKEVLKDENSSKEQIDAKVEALSKASHKLAEAMYKKDENAGANGGNKKDDDVIDAEVE.

Threonine 197 bears the Phosphothreonine; by autocatalysis mark. Residues 600-623 (KKDENAGANGGNKKDDDVIDAEVE) are disordered.

This sequence belongs to the heat shock protein 70 family.

In terms of biological role, acts as a chaperone. The polypeptide is Chaperone protein DnaK (Campylobacter concisus (strain 13826)).